The primary structure comprises 103 residues: Large ribosomal subunit protein eL14 (103 aa).

It belongs to the eukaryotic ribosomal protein eL14 family.

The protein is Large ribosomal subunit protein eL14 of Pyrobaculum aerophilum (strain ATCC 51768 / DSM 7523 / JCM 9630 / CIP 104966 / NBRC 100827 / IM2).